The following is a 315-amino-acid chain: MRKRARIIYNPTSGKEQFKRELPDALIKLEKAGYETSAYATEKIGDATLEAERAMHENYDVLIAAGGDGTLNEVVNGIAEKPNRPKLGVIPMGTVNDFGRALHIPNDIMGALDVIIEGHSTKVDIGKMNNRYFINLAAGGQLTQVSYETPSKLKSIVGPFAYYIKGFEMLPQMKAVDLRIEYDGNVFQGEALLFFLGLTNSMAGFEKLVPDAKLDDGYFTLIIVEKSNLAELGHIMTLASRGEHTKHPKVIYEKAKAINISSLTDLQLNVDGEYGGKLPANFLNLERHIDVFAPNDIVNEELISNDHVDDNLIEE.

In terms of domain architecture, DAGKc spans 1 to 132 (MRKRARIIYN…VDIGKMNNRY (132 aa)). Residues 10–14 (NPTSG), threonine 41, 67–73 (GDGTLNE), and threonine 94 contribute to the ATP site. Mg(2+) contacts are provided by lysine 213, aspartate 216, and tyrosine 218. The active-site Proton acceptor is glutamate 273.

Belongs to the diacylglycerol/lipid kinase family. As to quaternary structure, homodimer. The cofactor is Mg(2+).

The enzyme catalyses a 1,2-diacyl-sn-glycerol + ATP = a 1,2-diacyl-sn-glycero-3-phosphate + ADP + H(+). Functionally, catalyzes the phosphorylation of diacylglycerol (DAG) into phosphatidic acid. Is a key enzyme involved in the production of lipoteichoic acid by reintroducing DAG formed from the breakdown of membrane phospholipids into the phosphatidylglycerol biosynthetic pathway. The sequence is that of Diacylglycerol kinase (dagK) from Staphylococcus aureus (strain bovine RF122 / ET3-1).